A 355-amino-acid polypeptide reads, in one-letter code: Myosin-binding protein H-like (355 aa).

Polar residues-rich tracts occupy residues M1–Q16 and T31–S41. The disordered stretch occupies residues M1 to S41. Phosphoserine is present on S39. One can recognise an Ig-like C2-type 1 domain in the interval P46 to N140. Residues P149–A244 enclose the Fibronectin type-III domain. Positions P262–D346 constitute an Ig-like C2-type 2 domain. A disulfide bridge links C283 with C334. Omega-N-methylarginine is present on R322.

This sequence belongs to the immunoglobulin superfamily. MyBP family. As to expression, expressed in the atria as well as in discrete puncta throughout the right ventricular wall and septum.

Its subcellular location is the cytoplasm. The protein localises to the myofibril. It localises to the sarcomere. Functionally, myosin-binding protein which plays a role in cardiac function. Seems to regulate conduction in the atria and ventricular conduction systems. This is Myosin-binding protein H-like from Mus musculus (Mouse).